The primary structure comprises 375 residues: Succinyl-diaminopimelate desuccinylase (375 aa).

Histidine 66 contributes to the Zn(2+) binding site. Aspartate 68 is a catalytic residue. Aspartate 99 lines the Zn(2+) pocket. Glutamate 133 (proton acceptor) is an active-site residue. Zn(2+) contacts are provided by glutamate 134, glutamate 162, and histidine 348.

The protein belongs to the peptidase M20A family. DapE subfamily. As to quaternary structure, homodimer. Requires Zn(2+) as cofactor. Co(2+) is required as a cofactor.

It catalyses the reaction N-succinyl-(2S,6S)-2,6-diaminopimelate + H2O = (2S,6S)-2,6-diaminopimelate + succinate. Its pathway is amino-acid biosynthesis; L-lysine biosynthesis via DAP pathway; LL-2,6-diaminopimelate from (S)-tetrahydrodipicolinate (succinylase route): step 3/3. Functionally, catalyzes the hydrolysis of N-succinyl-L,L-diaminopimelic acid (SDAP), forming succinate and LL-2,6-diaminopimelate (DAP), an intermediate involved in the bacterial biosynthesis of lysine and meso-diaminopimelic acid, an essential component of bacterial cell walls. This Escherichia coli O6:K15:H31 (strain 536 / UPEC) protein is Succinyl-diaminopimelate desuccinylase.